The following is a 199-amino-acid chain: Fe/S biogenesis protein NfuA (199 aa).

[4Fe-4S] cluster contacts are provided by C151 and C154.

It belongs to the NfuA family. Homodimer. The cofactor is [4Fe-4S] cluster.

Involved in iron-sulfur cluster biogenesis. Binds a 4Fe-4S cluster, can transfer this cluster to apoproteins, and thereby intervenes in the maturation of Fe/S proteins. Could also act as a scaffold/chaperone for damaged Fe/S proteins. The protein is Fe/S biogenesis protein NfuA of Stenotrophomonas maltophilia (strain K279a).